The following is a 686-amino-acid chain: DNA ligase (686 aa).

NAD(+)-binding positions include 33 to 37, 82 to 83, and Glu-122; these read DSVYD and SL. Lys-124 serves as the catalytic N6-AMP-lysine intermediate. 4 residues coordinate NAD(+): Arg-145, Glu-182, Lys-300, and Lys-324. Residues Cys-418, Cys-421, Cys-436, and Cys-441 each contribute to the Zn(2+) site. Residues 600-686 enclose the BRCT domain; that stretch reads AVSQILAGKK…PTVESGDLHP (87 aa).

It belongs to the NAD-dependent DNA ligase family. LigA subfamily. The cofactor is Mg(2+). Mn(2+) serves as cofactor.

The catalysed reaction is NAD(+) + (deoxyribonucleotide)n-3'-hydroxyl + 5'-phospho-(deoxyribonucleotide)m = (deoxyribonucleotide)n+m + AMP + beta-nicotinamide D-nucleotide.. Functionally, DNA ligase that catalyzes the formation of phosphodiester linkages between 5'-phosphoryl and 3'-hydroxyl groups in double-stranded DNA using NAD as a coenzyme and as the energy source for the reaction. It is essential for DNA replication and repair of damaged DNA. The chain is DNA ligase from Synechococcus sp. (strain JA-2-3B'a(2-13)) (Cyanobacteria bacterium Yellowstone B-Prime).